Consider the following 556-residue polypeptide: Peptide chain release factor 3 (556 aa).

Residues 28-297 enclose the tr-type G domain; the sequence is QQRRNFAIIS…AFLDYALKPG (270 aa). Residues 37–44, 105–109, and 159–162 each bind GTP; these read SHPDAGKT, DTPGH, and NKMD.

Belongs to the TRAFAC class translation factor GTPase superfamily. Classic translation factor GTPase family. PrfC subfamily.

It is found in the cytoplasm. Functionally, increases the formation of ribosomal termination complexes and stimulates activities of RF-1 and RF-2. It binds guanine nucleotides and has strong preference for UGA stop codons. It may interact directly with the ribosome. The stimulation of RF-1 and RF-2 is significantly reduced by GTP and GDP, but not by GMP. This Synechococcus elongatus (strain ATCC 33912 / PCC 7942 / FACHB-805) (Anacystis nidulans R2) protein is Peptide chain release factor 3.